The chain runs to 206 residues: Imidazoleglycerol-phosphate dehydratase (206 aa).

The protein belongs to the imidazoleglycerol-phosphate dehydratase family.

It is found in the cytoplasm. It catalyses the reaction D-erythro-1-(imidazol-4-yl)glycerol 3-phosphate = 3-(imidazol-4-yl)-2-oxopropyl phosphate + H2O. The protein operates within amino-acid biosynthesis; L-histidine biosynthesis; L-histidine from 5-phospho-alpha-D-ribose 1-diphosphate: step 6/9. The polypeptide is Imidazoleglycerol-phosphate dehydratase (Synechococcus sp. (strain JA-3-3Ab) (Cyanobacteria bacterium Yellowstone A-Prime)).